The chain runs to 7073 residues: Replicase polyprotein 1ab (7073 aa).

The Cytoplasmic portion of the chain corresponds to 1–2202 (MESLVLGVNE…NYVKSPKFSK (2202 aa)). A CoV Nsp1 globular domain is found at 12 to 127 (THVQLSLPVL…YRNVLLRKNG (116 aa)). In terms of domain architecture, BetaCoV Nsp1 C-terminal spans 148–179 (ELGTDPIEDYEQNWNTKHGSGALRELTRELNG). A CoV Nsp2 N-terminal domain is found at 183-456 (TRYVDNNFCG…NEDLLEILSR (274 aa)). Residues C200, C231, H234, H236, C323, C326, C341, C344, C370, C373, H382, and C416 each contribute to the Zn(2+) site. The interval 200-236 (CIKDFLARAGKSMCTLSEQLDYIESKRGVYCCRDHEH) is C2H2. The tract at residues 323–344 (CNHCDEVSWQTCDFLKATCEHC) is C4. The segment at 370–416 (CPACQDPEIGPEHSVADYHNHSNIETRLRKGGRTRCFGGCVFAYVGC) is C2HC. One can recognise a CoV Nsp2 middle domain in the interval 458–688 (RVNINIVGDF…IDVVNKALEM (231 aa)). The CoV Nsp2 C-terminal domain maps to 690-818 (IDQVTIAGAK…TNNVFRLKGG (129 aa)). A Ubiquitin-like 1 domain is found at 822-930 (KGVTFGEDTV…MYCSFYPPDE (109 aa)). 2 disordered regions span residues 972 to 1003 (RVEE…EEPV) and 1175 to 1198 (RVEA…KSVV). The span at 974–999 (EEEEEEDWLDDTTEQSEIEPEPEPTP) shows a compositional bias: acidic residues. Residues 1003–1169 (VNQFTGYLKL…LYEQVVMDYL (167 aa)) enclose the Macro 1 domain. 2 consecutive Macro domains span residues 1207–1335 (KIKA…LPSE) and 1343–1470 (ILGT…TSSS). Residues 1472–1538 (TSEEHFVETV…SLDKLKSLLS (67 aa)) form the DPUP domain. The 56-residue stretch at 1542 to 1597 (VKTIKVFTTVDNTNLHTQLVDMSMTYGQQFGPTYLDGADVTKIKPHVNHEGKTFFV) folds into the Ubiquitin-like 2 domain. A Peptidase C16 domain is found at 1611–1875 (YYHTLDESFL…YTEIEPKLDG (265 aa)). C1651 functions as the For PL-PRO activity in the catalytic mechanism. The Zn(2+) site is built by C1729, C1732, C1764, and C1766. Residues 1729–1766 (CKHCGQKTTTLTGVEAVMYMGTLSYDNLKTGVSIPCVC) form a C4-type zinc finger. Residues H1812 and D1826 each act as for PL-PRO activity in the active site. The Nucleic acid-binding domain maps to 1888–1998 (PIDLVPTQPL…CLWSTKPVDT (111 aa)). Residues 2023 to 2132 (PTSEEVVENP…LGQAAITTSN (110 aa)) enclose the G2M domain. A helical transmembrane segment spans residues 2203 to 2223 (LFTIAMWLLLLSICLGSLICV). The tract at residues 2203-2324 (LFTIAMWLLL…FYLLGLSAIM (122 aa)) is HD1. Residues 2224 to 2294 (TAAFGVLLSN…QVTISSYKLD (71 aa)) form the 3Ecto domain. Over 2224 to 2303 (TAAFGVLLSN…DLTILGLAAE (80 aa)) the chain is Lumenal. Cystine bridges form between C2240-C2268 and C2259-C2265. The helical transmembrane segment at 2304-2324 (WVLAYMLFTKFFYLLGLSAIM) threads the bilayer. The Cytoplasmic portion of the chain corresponds to 2325–2754 (QVFFGYFASH…TCFKLMLKAT (430 aa)). Positions 2372 to 2462 (KSYVHIMDGC…QFKRPINPTD (91 aa)) are Y1. Residues 2372 to 2740 (KSYVHIMDGC…ITTKISLKGG (369 aa)) form the CoV Nsp3 Y domain. 8 residues coordinate Zn(2+): H2376, C2381, C2386, C2389, C2422, H2425, C2429, and C2432. Residues 2376–2389 (HIMDGCTSSTCMMC) are ZF1. The segment at 2422–2432 (CKTHNWNCLNC) is ZF2. The interval 2463-2557 (QSSYIVDSVA…LLDQALVSDV (95 aa)) is Y2. The segment at 2463–2740 (QSSYIVDSVA…ITTKISLKGG (278 aa)) is coV-Y. The Y3 stretch occupies residues 2558–2639 (GDSTEVSVKM…ECLKLSHHSD (82 aa)). The interval 2640–2740 (LEVTGDSCNN…ITTKISLKGG (101 aa)) is Y4. The helical transmembrane segment at 2755–2775 (LLCVLAALVCYIVMPVHTLSI) threads the bilayer. Residues 2755–3125 (LLCVLAALVC…WITAIYVFCI (371 aa)) are HD2. The Lumenal portion of the chain corresponds to 2776 to 3021 (HDGYTNEIIG…VQPVGALDVS (246 aa)). Residues 3022-3042 (ASVVAGGIIAILVTCAAYYFM) form a helical membrane-spanning segment. Residues 3043-3076 (KFRRVFGEYNHVVAANALLFLMSFTILCLVPAYS) are Cytoplasmic-facing. The helical transmembrane segment at 3077-3097 (FLPGVYSVFYLYLTFYFTNDV) threads the bilayer. The Lumenal segment spans residues 3098-3104 (SFLAHLQ). Residues 3105 to 3125 (WFAMFSPIVPFWITAIYVFCI) form a helical membrane-spanning segment. The Cytoplasmic portion of the chain corresponds to 3126–3563 (SLKHCHWFFN…KGTHHWMLLT (438 aa)). The region spanning 3142-3240 (VMFNGVTFST…QTSITSAVLQ (99 aa)) is the Nsp4C domain. One can recognise a Peptidase C30 domain in the interval 3241-3546 (SGFRKMAFPS…VRQCSGVTFQ (306 aa)). Catalysis depends on for 3CL-PRO activity residues H3281 and C3385. A helical transmembrane segment spans residues 3564 to 3584 (FLTSLLILVQSTQWSLFFFVY). The HD3 stretch occupies residues 3564-3776 (FLTSLLILVQ…CCCYFGLFCL (213 aa)). Position 3585 (E3585) is a topological domain, lumenal. A helical membrane pass occupies residues 3586–3606 (NAFLPFTLGIMAIAACAMLLV). Residues 3607–3611 (KHKHA) lie on the Cytoplasmic side of the membrane. A helical transmembrane segment spans residues 3612–3632 (FLCLFLLPSLATVAYFNMVYM). Topologically, residues 3633–3657 (PASWVMRIMTWLELADTSLSGYRLK) are lumenal. The chain crosses the membrane as a helical span at residues 3658-3678 (DCVMYASALVLLILMTARTVY). At 3679-3727 (DDAARRVWTLMNVITLVYKVYYGNALDQAISMWALVISVTSNYSGVVTT) the chain is on the cytoplasmic side. A helical membrane pass occupies residues 3728-3748 (IMFLARAIVFVCVEYYPLLFI). Topologically, residues 3749 to 3755 (TGNTLQC) are lumenal. Residues 3756-3776 (IMLVYCFLGYCCCCYFGLFCL) form a helical membrane-spanning segment. Topologically, residues 3777 to 7073 (LNRYFRLTLG…VVSSDILVNN (3297 aa)) are cytoplasmic. In terms of domain architecture, RdRp Nsp7 cofactor spans 3837-3919 (SKMSDVKCTS…EMLDNRATLQ (83 aa)). Positions 3920-4117 (AIASEFSSLP…LRANSAVKLQ (198 aa)) constitute a RdRp Nsp8 cofactor domain. In terms of domain architecture, Nsp9 ssRNA-binding spans 4118–4230 (NNELSPVALR…GSLAATVRLQ (113 aa)). Residues 4231-4369 (AGNATEVPAN…CDQLREPLMQ (139 aa)) enclose the ExoN/MTase coactivator domain. Zn(2+)-binding residues include C4304, C4307, H4313, C4320, C4347, C4350, C4358, and C4360. Zinc fingers lie at residues 4304 to 4320 (CLYC…KGFC) and 4347 to 4360 (CTVC…GCSC). The 255-residue stretch at 4376 to 4630 (FLNRVCGVSA…AAESHMDADL (255 aa)) folds into the NiRAN domain. Mn(2+) is bound by residues N4578 and D4587. Residues 4635 to 4733 (IKWDLLKYDF…HNQDVNLHSS (99 aa)) enclose the Nsp12 Interface domain. H4664, C4670, C4675, C4679, and C4856 together coordinate Zn(2+). The Nsp12 RNA-dependent RNA polymerase domain occupies 4734-5301 (RLSFKELLVY…AMYTPHTVLQ (568 aa)). A rdRp Fingers N-ter region spans residues 4736-4950 (SFKELLVYAA…HQKLLKSIAA (215 aa)). The tract at residues 4951–4989 (TRGATVVIGTSKFYGGWHNMLKTVYSDVETPHLMGWDYP) is rdRp Palm N-ter. A RdRp catalytic domain is found at 4981–5143 (PHLMGWDYPK…CYNSNYAAQG (163 aa)). The rdRp Fingers C-ter stretch occupies residues 4990–5048 (KCDRAMPNMLRIMASLVLARKHNTCCNLSHRFYRLANECAQVLSEMVMCGGSLYVKPGG). 3 residues coordinate Zn(2+): H5011, C5014, and C5015. Positions 5049-5184 (TSSGDATTAY…TKGPHEFCSQ (136 aa)) are rdRp Palm C-ter. Active-site residues include S5128, D5129, and D5130. The tract at residues 5185-5301 (HTMLVKQGDD…AMYTPHTVLQ (117 aa)) is rdRp Thumb. Residues 5302–5414 (AVGACVLCNS…TDFNAIATCD (113 aa)) enclose the CV ZBD domain. Zn(2+) contacts are provided by C5306, C5309, C5317, C5320, C5327, C5330, H5334, H5340, C5351, C5356, C5373, and H5376. The (+)RNA virus helicase ATP-binding domain maps to 5558-5739 (NISDEFSSNV…MKTIGPDMFL (182 aa)). 5583–5590 (GPPGTGKS) lines the ATP pocket. In terms of domain architecture, (+)RNA virus helicase C-terminal spans 5740-5909 (GTCRRCPAEI…TLQAENVTGL (170 aa)). The ExoN domain maps to 5974 to 6189 (MFITREEAIR…RCLAVHECFV (216 aa)). Catalysis depends on residues D5992, E5994, and E6093. Mg(2+) contacts are provided by E5994 and E6093. Positions 6109, 6112, 6128, 6131, 6159, 6163, and 6166 each coordinate Zn(2+). Catalysis depends on residues H6170 and D6175. H6170 and D6175 together coordinate Mg(2+). C6181 contacts Zn(2+). The 232-residue stretch at 6198-6429 (YPIIGDELRV…NLWNTFTRLQ (232 aa)) folds into the N7-MTase domain. 6233-6239 (DIGNPKA) contributes to the S-adenosyl-L-methionine binding site. The segment at 6316–6330 (CDGGSLYVNKHAFHT) is gpppA-binding. Residues C6354, C6375, C6386, and H6389 each coordinate Zn(2+). The Nsp15 N-terminal oligomerization domain occupies 6430–6490 (SLENVAYNVV…NVAFELWAKR (61 aa)). The 126-residue stretch at 6491-6616 (NIKPVPEIKI…YFKKVDGIIQ (126 aa)) folds into the AV-Nsp11N/CoV-Nsp15M domain. Positions 6633–6772 (KPRSQMETDF…KDGHVETFYP (140 aa)) constitute a NendoU domain. Catalysis depends on residues H6663, H6678, K6718, K6821, D6905, K6945, and E6978. The Nidovirus-type SAM-dependent 2'-O-MTase domain maps to 6777–7071 (SQAWQPGVAM…RVVVSSDILV (295 aa)).

It belongs to the coronaviruses polyprotein 1ab family. As to quaternary structure, interacts with host PHB and PHB2. In terms of assembly, interacts with papain-like protease nsp3 and non-structural protein 6. Monomer. Homodimer. Only the homodimer shows catalytic activity. As to quaternary structure, interacts with nsp8 and nsp12 to form the replication-transcription complex (RTC): nsp12, nsp7, two subunits of nsp8, and up to two subunits of nsp13. Eight copies of nsp7 and eight copies of nsp8 assemble to form a heterohexadecamer dsRNA-encircling ring structure. In terms of assembly, interacts with nsp7, nsp13 and nsp12 to form the replication-transcription complex (RTC): nsp12, nsp7, two subunits of nsp8, and up to two subunits of nsp13. Eight copies of nsp7 and eight copies of nsp8 assemble to form a heterohexadecamer dsRNA-encircling ring structure. Interacts with ORF6 protein. Homodimer. Interacts with nsp12. As to quaternary structure, homododecamer. Interacts with proofreading exoribonuclease nsp14 and 2'-O-methyltransferase nsp16; these interactions enhance nsp14 and nsp16 enzymatic activities. In terms of assembly, interacts with nsp7 and nsp8 to form the replication-transcription complex (RTC): nsp12, nsp7, two subunits of nsp8, and up to two subunits of nsp13. Interacts with nsp9. Interacts with nsp8 to form the replication-transcription complex (RTC): nsp12, nsp7, two subunits of nsp8, and up to two subunits of nsp13. As to quaternary structure, interacts (via N-terminus) with host DDX1. Interacts with non-structural protein 10. In terms of assembly, homohexamer. Interacts with nsp10. Zn(2+) is required as a cofactor. It depends on Mn(2+) as a cofactor. The cofactor is Mg(2+). Post-translationally, specific enzymatic cleavages in vivo by its own proteases yield mature proteins. 3C-like proteinase nsp5 liberates nsps 6-16 from the polyprotein. Papain-like and 3C-like proteinases are autocatalytically processed.

The protein resides in the host cytoplasm. It is found in the host endosome. It localises to the host membrane. Its subcellular location is the host Golgi apparatus. The protein localises to the host perinuclear region. The protein resides in the host endoplasmic reticulum. It is found in the host endoplasmic reticulum-Golgi intermediate compartment. It catalyses the reaction RNA(n) + a ribonucleoside 5'-triphosphate = RNA(n+1) + diphosphate. The catalysed reaction is ATP + H2O = ADP + phosphate + H(+). The enzyme catalyses TSAVLQ-|-SGFRK-NH2 and SGVTFQ-|-GKFKK the two peptides corresponding to the two self-cleavage sites of the SARS 3C-like proteinase are the two most reactive peptide substrates. The enzyme exhibits a strong preference for substrates containing Gln at P1 position and Leu at P2 position.. It carries out the reaction Thiol-dependent hydrolysis of ester, thioester, amide, peptide and isopeptide bonds formed by the C-terminal Gly of ubiquitin (a 76-residue protein attached to proteins as an intracellular targeting signal).. It catalyses the reaction a 5'-end (N(7)-methyl 5'-triphosphoguanosine)-ribonucleoside in mRNA + S-adenosyl-L-methionine = a 5'-end (N(7)-methyl 5'-triphosphoguanosine)-(2'-O-methyl-ribonucleoside) in mRNA + S-adenosyl-L-homocysteine + H(+). The catalysed reaction is uridylyl-uridylyl-ribonucleotide-RNA = a 3'-end uridylyl-2',3'-cyclophospho-uridine-RNA + a 5'-end dephospho-ribonucleoside-RNA. The enzyme catalyses a 5'-end (5'-triphosphoguanosine)-ribonucleoside in mRNA + S-adenosyl-L-methionine = a 5'-end (N(7)-methyl 5'-triphosphoguanosine)-ribonucleoside in mRNA + S-adenosyl-L-homocysteine. It carries out the reaction a 5'-end diphospho-ribonucleoside in mRNA + GTP + H(+) = a 5'-end (5'-triphosphoguanosine)-ribonucleoside in mRNA + diphosphate. With respect to regulation, inhibited by Remdesivir (GS-5734). Its function is as follows. Multifunctional protein involved in the transcription and replication of viral RNAs. Contains the proteinases responsible for the cleavages of the polyprotein. Inhibits host translation by interacting with the 40S ribosomal subunit. The nsp1-40S ribosome complex further induces an endonucleolytic cleavage near the 5'UTR of host mRNAs, targeting them for degradation. Viral mRNAs are not susceptible to nsp1-mediated endonucleolytic RNA cleavage thanks to the presence of a 5'-end leader sequence and are therefore protected from degradation. By suppressing host gene expression, nsp1 facilitates efficient viral gene expression in infected cells and evasion from host immune response. May disrupt nuclear pore function by binding and displacing host NUP93. Functionally, may play a role in the modulation of host cell survival signaling pathway by interacting with host PHB and PHB2. Indeed, these two proteins play a role in maintaining the functional integrity of the mitochondria and protecting cells from various stresses. In terms of biological role, responsible for the cleavages located at the N-terminus of the replicase polyprotein. In addition, PL-PRO possesses a deubiquitinating/deISGylating activity and processes both 'Lys-48'- and 'Lys-63'-linked polyubiquitin chains from cellular substrates. Plays a role in host membrane rearrangement that leads to creation of cytoplasmic double-membrane vesicles (DMV) necessary for viral replication. Nsp3, nsp4 and nsp6 together are sufficient to form DMV. Antagonizes innate immune induction of type I interferon by blocking the phosphorylation, dimerization and subsequent nuclear translocation of host IRF3. Also prevents host NF-kappa-B signaling. Its function is as follows. Plays a role in host membrane rearrangement that leads to creation of cytoplasmic double-membrane vesicles (DMV) necessary for viral replication. Alone appears incapable to induce membrane curvature, but together with nsp3 is able to induce paired membranes. Nsp3, nsp4 and nsp6 together are sufficient to form DMV. Cleaves the C-terminus of replicase polyprotein at 11 sites. Recognizes substrates containing the core sequence [ILMVF]-Q-|-[SGACN]. May cleave human NLRP1 in lung epithelial cells, thereby activating the NLRP1 inflammasome pathway. Also able to bind an ADP-ribose-1''-phosphate (ADRP). May cleave host ATP6V1G1 thereby modifying host vacuoles intracellular pH. Functionally, plays a role in host membrane rearrangement that leads to creation of cytoplasmic double-membrane vesicles (DMV) necessary for viral replication. Nsp3, nsp4 and nsp6 together are sufficient to form DMV. Plays a role in the initial induction of autophagosomes from host endoplasmic reticulum. Later, limits the expansion of these phagosomes that are no longer able to deliver viral components to lysosomes. In terms of biological role, forms a hexadecamer with nsp8 (8 subunits of each) that may participate in viral replication by acting as a primase. Alternatively, may synthesize substantially longer products than oligonucleotide primers. Its function is as follows. Forms a hexadecamer with nsp7 (8 subunits of each) that may participate in viral replication by acting as a primase. Alternatively, may synthesize substantially longer products than oligonucleotide primers. Forms a primer, NSP9-pU, which is utilized by the polymerase for the initiation of RNA chains. Interacts with ribosome signal recognition particle RNA (SRP). Together with NSP8, suppress protein integration into the cell membrane, thereby disrupting host immune defenses. Functionally, plays a pivotal role in viral transcription by stimulating both nsp14 3'-5' exoribonuclease and nsp16 2'-O-methyltransferase activities. Therefore plays an essential role in viral mRNAs cap methylation. In terms of biological role, RNA-directed RNA polymerase that catalyzes the transcription of viral genomic and subgenomic RNAs. Acts in complex with nsp7 and nsp8 to transcribe both the minus and positive strands of genomic RNA. The kinase-like NiRAN domain of NSP12 attaches one or more nucleotides to the amino terminus of NSP9, forming a covalent RNA-protein intermediate that serves as transcription/replication primer. Subgenomic RNAs (sgRNAs) are formed by discontinuous transcription: The polymerase has the ability to pause at transcription-regulating sequences (TRS) and jump to the leader TRS, resulting in a major deletion. This creates a series of subgenomic RNAs that are replicated, transcribed and translated. In addition, Nsp12 is a subunit of the viral RNA capping enzyme that catalyzes the RNA guanylyltransferase reaction for genomic and sub-genomic RNAs. Subsequently, the NiRAN domain transfers RNA to GDP, and forms the core cap structure GpppA-RNA. Its function is as follows. Multi-functional protein with a zinc-binding domain in N-terminus displaying RNA and DNA duplex-unwinding activities with 5' to 3' polarity. Activity of helicase is dependent on magnesium. Plays a role in viral RNA synthesis through two distinct activities. The N7-guanine methyltransferase activity plays a role in the formation of the cap structure GpppA-RNA. The proofreading exoribonuclease reduces the sensitivity of the virus to RNA mutagens during replication. This activity acts on both ssRNA and dsRNA in a 3'-5' direction. Functionally, plays a role in viral transcription/replication and prevents the simultaneous activation of host cell dsRNA sensors, such as MDA5/IFIH1, OAS, and PKR. Acts by degrading the 5'-polyuridines generated during replication of the poly(A) region of viral genomic and subgenomic RNAs. Catalyzes a two-step reaction in which a 2'3'-cyclic phosphate (2'3'-cP) is first generated by 2'-O transesterification, which is then hydrolyzed to a 3'-phosphate (3'-P). If not degraded, poly(U) RNA would hybridize with poly(A) RNA tails and activate host dsRNA sensors. In terms of biological role, methyltransferase that mediates mRNA cap 2'-O-ribose methylation to the 5'-cap structure of viral mRNAs. N7-methyl guanosine cap is a prerequisite for binding of nsp16. Therefore plays an essential role in viral mRNAs cap methylation which is essential to evade immune system. This Severe acute respiratory syndrome coronavirus (SARS-CoV) protein is Replicase polyprotein 1ab (rep).